The primary structure comprises 328 residues: DNA repair protein RAD51 homolog 4 (328 aa).

Residues 1–83 (MGVLRVGLCP…ELKTSTAILS (83 aa)) are preferentially binds ssDNA. 107 to 114 (GGPGSGKT) lines the ATP pocket.

The protein belongs to the RecA family. RAD51 subfamily. As to quaternary structure, part of the BCDX2 complex consisting of RAD51B, RAD51C, RAD51D and XRCC2; the complex has a ring-like structure arranged into a flat disc around a central channel. In the absence of DNA, the BCDX2 subcomplex XRCC2:RAD51D formed a multimeric ring structure; in the presence of single-stranded DNA it formed a filamentous structure with the ssDNA. Interacts with SWSAP1 and ZSWIM7; involved in homologous recombination repair. Interacts with BLM; required for stimulation of BLM activity by the BCDX2 subcomplex XRCC2:RAD51D. As to expression, expressed in colon, prostate, spleen, testis, ovary, thymus and small intestine. Weakly expressed in leukocytes.

The protein resides in the nucleus. Its subcellular location is the cytoplasm. It localises to the cytoskeleton. It is found in the microtubule organizing center. The protein localises to the centrosome. The protein resides in the chromosome. Its subcellular location is the telomere. In terms of biological role, involved in the homologous recombination repair (HRR) pathway of double-stranded DNA breaks arising during DNA replication or induced by DNA-damaging agents. Bind to single-stranded DNA (ssDNA) and has DNA-dependent ATPase activity. Part of the RAD51 paralog protein complex BCDX2 which acts in the BRCA1-BRCA2-dependent HR pathway. Upon DNA damage, BCDX2 acts downstream of BRCA2 recruitment and upstream of RAD51 recruitment. BCDX2 binds predominantly to the intersection of the four duplex arms of the Holliday junction and to junction of replication forks. The BCDX2 complex was originally reported to bind single-stranded DNA, single-stranded gaps in duplex DNA and specifically to nicks in duplex DNA. Involved in telomere maintenance. The BCDX2 subcomplex XRCC2:RAD51D can stimulate Holliday junction resolution by BLM. This chain is DNA repair protein RAD51 homolog 4 (RAD51D), found in Homo sapiens (Human).